A 295-amino-acid chain; its full sequence is Cytidine deaminase (295 aa).

2 consecutive CMP/dCMP-type deaminase domains span residues 48–168 and 187–295; these read TDNQ…FGPS and EDDD…YLSL. Residue 89 to 91 coordinates substrate; that stretch reads NME. Residue His102 participates in Zn(2+) binding. The Proton donor role is filled by Glu104. Zn(2+)-binding residues include Cys129 and Cys132.

This sequence belongs to the cytidine and deoxycytidylate deaminase family. In terms of assembly, homodimer. It depends on Zn(2+) as a cofactor.

It carries out the reaction cytidine + H2O + H(+) = uridine + NH4(+). The catalysed reaction is 2'-deoxycytidine + H2O + H(+) = 2'-deoxyuridine + NH4(+). In terms of biological role, this enzyme scavenges exogenous and endogenous cytidine and 2'-deoxycytidine for UMP synthesis. The polypeptide is Cytidine deaminase (Vibrio vulnificus (strain YJ016)).